We begin with the raw amino-acid sequence, 555 residues long: Urocanate hydratase (555 aa).

NAD(+)-binding positions include G52 to G53, Q130, G176 to G178, E196, R201, N242 to A243, Q263 to H267, Y273 to L274, and Y322. C410 is an active-site residue. Position 492 (G492) interacts with NAD(+).

The protein belongs to the urocanase family. Requires NAD(+) as cofactor.

The protein localises to the cytoplasm. It catalyses the reaction 4-imidazolone-5-propanoate = trans-urocanate + H2O. Its pathway is amino-acid degradation; L-histidine degradation into L-glutamate; N-formimidoyl-L-glutamate from L-histidine: step 2/3. Its function is as follows. Catalyzes the conversion of urocanate to 4-imidazolone-5-propionate. This chain is Urocanate hydratase, found in Shewanella baltica (strain OS223).